A 277-amino-acid polypeptide reads, in one-letter code: Proteasome subunit beta type-7 (277 aa).

A propeptide spans 1–43 (removed in mature form); sequence MAAVSVYERPVGGFSFDNCRRNAVLEADFAKKGYKLPTARKTG. Residue T44 is the Nucleophile of the active site.

This sequence belongs to the peptidase T1B family. In terms of assembly, the 26S proteasome consists of a 20S proteasome core and two 19S regulatory subunits. The 20S proteasome core is a barrel-shaped complex made of 28 subunits that are arranged in four stacked rings. The two outer rings are each formed by seven alpha subunits, and the two inner rings are formed by seven beta subunits. The proteolytic activity is exerted by three beta-subunits PSMB5, PSMB6 and PSMB7.

The protein localises to the cytoplasm. The protein resides in the nucleus. The enzyme catalyses Cleavage of peptide bonds with very broad specificity.. Component of the 20S core proteasome complex involved in the proteolytic degradation of most intracellular proteins. This complex plays numerous essential roles within the cell by associating with different regulatory particles. Associated with two 19S regulatory particles, forms the 26S proteasome and thus participates in the ATP-dependent degradation of ubiquitinated proteins. The 26S proteasome plays a key role in the maintenance of protein homeostasis by removing misfolded or damaged proteins that could impair cellular functions, and by removing proteins whose functions are no longer required. Associated with the PA200 or PA28, the 20S proteasome mediates ubiquitin-independent protein degradation. This type of proteolysis is required in several pathways including spermatogenesis (20S-PA200 complex) or generation of a subset of MHC class I-presented antigenic peptides (20S-PA28 complex). Within the 20S core complex, PSMB7 displays a trypsin-like activity. In Bos taurus (Bovine), this protein is Proteasome subunit beta type-7 (PSMB7).